The sequence spans 183 residues: DNA-directed RNA polymerase subunit Rpo7 (183 aa).

The region spanning 82–164 (HEVIEGEVSQ…RLPRIALTMK (83 aa)) is the S1 motif domain.

This sequence belongs to the eukaryotic RPB7/RPC8 RNA polymerase subunit family. Part of the 13-subunit RNA polymerase complex. Forms a stalk with Rpo4 that extends from the main structure.

The protein localises to the cytoplasm. It carries out the reaction RNA(n) + a ribonucleoside 5'-triphosphate = RNA(n+1) + diphosphate. DNA-dependent RNA polymerase (RNAP) catalyzes the transcription of DNA into RNA using the four ribonucleoside triphosphates as substrates. Functionally, reconstitution experiments show this subunit is required for basic activity. The chain is DNA-directed RNA polymerase subunit Rpo7 from Sulfolobus acidocaldarius (strain ATCC 33909 / DSM 639 / JCM 8929 / NBRC 15157 / NCIMB 11770).